Here is a 459-residue protein sequence, read N- to C-terminus: Transcription factor 7-like 2 (459 aa).

The segment covering 1-11 (MPQLNGGGGDD) has biased composition (gly residues). The segment at 1 to 53 (MPQLNGGGGDDLGANDELISFKDEGEQEEKNSENSSAERDLADVKSSLVNESE) is CTNNB1-binding. The interval 1–96 (MPQLNGGGGD…AKRQDGGLFK (96 aa)) is disordered. Residues 19 to 43 (ISFKDEGEQEEKNSENSSAERDLAD) show a composition bias toward basic and acidic residues. A Glycyl lysine isopeptide (Lys-Gly) (interchain with G-Cter in SUMO2) cross-link involves residue lysine 22. A compositionally biased stretch (polar residues) spans 47–56 (SLVNESETNQ). A compositionally biased stretch (basic and acidic residues) spans 63 to 91 (EAERRPPPRSESFRDKSRESLEEAAKRQD). 2 positions are modified to phosphothreonine; by NLK: threonine 178 and threonine 189. Positions 178 to 372 (TPLITYSNEH…RRWHALSREE (195 aa)) are mediates interaction with MAD2L2. Residues 295–305 (TVKQESSQSDV) show a composition bias toward polar residues. 2 disordered regions span residues 295–327 (TVKQESSQSDVGSLHSSKHQDSKKEEEKKKPHI) and 397–418 (RDNYGKKKKRKRDKQPGETNEH). A Glycyl lysine isopeptide (Lys-Gly) (interchain with G-Cter in SUMO) cross-link involves residue lysine 297. The span at 312–323 (KHQDSKKEEEKK) shows a compositional bias: basic and acidic residues. The HMG box DNA-binding region spans 327–395 (IKKPLNAFML…LHMQLYPGWS (69 aa)). The Nuclear localization signal motif lies at 402-408 (KKKKRKR).

The protein belongs to the TCF/LEF family. As to quaternary structure, interacts with TGFB1I1. Interacts with SPIN1. Interacts with CTNNB1 (via the armadillo repeat); forms stable transcription complex. Interacts with EP300. Interacts with NLK. Interacts with CCDC85B (probably through the HMG box); prevents interaction with CTNNB1. Interacts with TNIK. Interacts with MAD2L2; prevents TCF7L2/TCF4 binding to promZIPK/DAPK3oters, negatively modulating its transcriptional activity. Interacts with ZIPK/DAPK3. Interacts with XIAP/BIRC4 and TLE3. Interacts with DDIT3/CHOP. The CTNNB1 and TCF7L2/TCF4 complex interacts with PML (isoform PML-4). Identified in a complex with CTNNB1 and FERMT2. Interacts with C11orf84/SPINDOC in a SPIN1-dependent manner. Interacts with DAZAP2; the interaction results in localization of DAZAP2 to the nucleus. Post-translationally, phosphorylated at Thr-178 and/or Thr-189 by NLK. Phosphorylation by NLK at these sites inhibits DNA-binding by TCF7L2/TCF4, thereby preventing transcriptional activation of target genes of the canonical Wnt/beta-catenin signaling pathway. Polysumoylated. Sumoylation is enhanced by PIAS family members and desumoylation is enhanced by SENP2. Sumoylation/desumoylation regulates TCF7L2/TCF4 transcription activity in the Wnt/beta-catenin signaling pathway without altering interaction with CTNNB1 nor binding to DNA. As to expression, detected in adult brain and liver, and at lower levels in intestine, with a clear increase from the distal colon to the duodenum. Detected at low levels in heart, lung, kidney, pituitary and testis.

It localises to the nucleus. The protein resides in the PML body. Its function is as follows. Participates in the Wnt signaling pathway and modulates MYC expression by binding to its promoter in a sequence-specific manner. Acts as a repressor in the absence of CTNNB1, and as activator in its presence. Activates transcription from promoters with several copies of the Tcf motif CCTTTGATC in the presence of CTNNB1. TLE1, TLE2, TLE3 and TLE4 repress transactivation mediated by TCF7L2/TCF4 and CTNNB1. Expression of dominant-negative mutants results in cell-cycle arrest in G1. Necessary for the maintenance of the epithelial stem-cell compartment of the small intestine. The polypeptide is Transcription factor 7-like 2 (Tcf7l2) (Mus musculus (Mouse)).